A 154-amino-acid chain; its full sequence is 6,7-dimethyl-8-ribityllumazine synthase (154 aa).

5-amino-6-(D-ribitylamino)uracil-binding positions include 22-23 (FN), 56-58 (SWE), and 80-82 (VLI). 85–86 (AT) is a (2S)-2-hydroxy-3-oxobutyl phosphate binding site. His-88 (proton donor) is an active-site residue. Phe-113 contributes to the 5-amino-6-(D-ribitylamino)uracil binding site. Residue Arg-127 participates in (2S)-2-hydroxy-3-oxobutyl phosphate binding. Lys-135 contacts 5-amino-6-(D-ribitylamino)uracil.

It belongs to the DMRL synthase family. Forms an icosahedral capsid composed of 60 subunits, arranged as a dodecamer of pentamers.

The enzyme catalyses (2S)-2-hydroxy-3-oxobutyl phosphate + 5-amino-6-(D-ribitylamino)uracil = 6,7-dimethyl-8-(1-D-ribityl)lumazine + phosphate + 2 H2O + H(+). It participates in cofactor biosynthesis; riboflavin biosynthesis; riboflavin from 2-hydroxy-3-oxobutyl phosphate and 5-amino-6-(D-ribitylamino)uracil: step 1/2. Catalyzes the formation of 6,7-dimethyl-8-ribityllumazine by condensation of 5-amino-6-(D-ribitylamino)uracil with 3,4-dihydroxy-2-butanone 4-phosphate. This is the penultimate step in the biosynthesis of riboflavin. This Aquifex aeolicus (strain VF5) protein is 6,7-dimethyl-8-ribityllumazine synthase (ribH).